The chain runs to 161 residues: MGCCYSSENEDSDQDREERKLLLDPSSPPTKALNGAEPNYHSLPSARTDEQALLSSILAKTASNIIDVSAADSQGMEQHEYMDRARQYSTRLAVLSSSLTHWKKLPPLPSLTSQPHQVLASEPVPFSDLQQVSRIAAYAYSALSQIRVDAKEELVVQFGIP.

The disordered stretch occupies residues 1-43; the sequence is MGCCYSSENEDSDQDREERKLLLDPSSPPTKALNGAEPNYHSL. The N-myristoyl glycine moiety is linked to residue Gly2. 2 S-palmitoyl cysteine lipidation sites follow: Cys3 and Cys4. Lys20 participates in a covalent cross-link: Glycyl lysine isopeptide (Lys-Gly) (interchain with G-Cter in ubiquitin). A Phosphoserine modification is found at Ser27. Residue Lys31 forms a Glycyl lysine isopeptide (Lys-Gly) (interchain with G-Cter in ubiquitin) linkage. Phosphoserine occurs at positions 42 and 56. Lys60 is covalently cross-linked (Glycyl lysine isopeptide (Lys-Gly) (interchain with G-Cter in ubiquitin)). Ser98 is modified (phosphoserine). Residues Lys103 and Lys104 each participate in a glycyl lysine isopeptide (Lys-Gly) (interchain with G-Cter in ubiquitin) cross-link. Residues 121–161 are interaction with LAMTOR2 and LAMTOR3; that stretch reads SEPVPFSDLQQVSRIAAYAYSALSQIRVDAKEELVVQFGIP. Ser141 bears the Phosphoserine mark.

It belongs to the LAMTOR1 family. In terms of assembly, part of the Ragulator complex composed of LAMTOR1, LAMTOR2, LAMTOR3, LAMTOR4 and LAMTOR5. LAMTOR4 and LAMTOR5 form a heterodimer that interacts, through LAMTOR1, with a LAMTOR2, LAMTOR3 heterodimer. Interacts with LAMTOR2 and LAMTOR3; the interaction is direct. The Ragulator complex interacts with both the mTORC1 complex and heterodimers constituted of the Rag GTPases RagA/RRAGA, RagB/RRAGB, RagC/RRAGC and RagD/RRAGD; regulated by amino acid availability. The Ragulator complex interacts with SLC38A9; the probable amino acid sensor. Component of the lysosomal folliculin complex (LFC), composed of FLCN, FNIP1 (or FNIP2), RagA/RRAGA or RagB/RRAGB GDP-bound, RagC/RRAGC or RagD/RRAGD GTP-bound, and Ragulator. Associates with the lysosomal V-ATPase complex; interaction promotes the guanine nucleotide exchange factor (GEF) of the Ragulator complex. Interacts with MMP14. Interacts with CDKN1B; prevents the interaction of CDKN1B with RHOA leaving RHOA in a form accessible to activation by ARHGEF2. Interacts with PIP4P1. N-terminal myristoylation and palmitoylation mediates its recruitment to lysosome membranes, thereby promoting localization of the Ragulator complex to lysosomes. N-myristoylation by NMT1 is required for palmitoylation at Cys-3 and Cys-4. May be palmitoylated by ZDHHC3. In terms of processing, ubiquitinated at Lys-60, Lys-103 and Lys-104 by UBE3A, promoting its degradation by the proteasome. Ubiquitination at Lys-20 impairs the association with the lysosomal V-ATPase complex. Deubiquitination at Lys-20 by USP32 promotes the association with the lysosomal V-ATPase complex and subsequent activation of the mTORC1 complex.

The protein resides in the lysosome membrane. It is found in the late endosome membrane. Functionally, key component of the Ragulator complex, a multiprotein complex involved in amino acid sensing and activation of mTORC1, a signaling complex promoting cell growth in response to growth factors, energy levels, and amino acids. Activated by amino acids through a mechanism involving the lysosomal V-ATPase, the Ragulator plays a dual role for the small GTPases Rag (RagA/RRAGA, RagB/RRAGB, RagC/RRAGC and/or RagD/RRAGD): it (1) acts as a guanine nucleotide exchange factor (GEF), activating the small GTPases Rag and (2) mediates recruitment of Rag GTPases to the lysosome membrane. Activated Ragulator and Rag GTPases function as a scaffold recruiting mTORC1 to lysosomes where it is in turn activated. LAMTOR1 is directly responsible for anchoring the Ragulator complex to the lysosomal membrane. LAMTOR1 wraps around the other subunits of the Ragulator complex to hold them in place and interacts with the Rag GTPases, thereby playing a key role in the recruitment of the mTORC1 complex to lysosomes. Also involved in the control of embryonic stem cells differentiation via non-canonical RagC/RRAGC and RagD/RRAGD activation: together with FLCN, it is necessary to recruit and activate RagC/RRAGC and RagD/RRAGD at the lysosomes, and to induce exit of embryonic stem cells from pluripotency via non-canonical, mTOR-independent TFE3 inactivation. Also required for late endosomes/lysosomes biogenesis it may regulate both the recycling of receptors through endosomes and the MAPK signaling pathway through recruitment of some of its components to late endosomes. May be involved in cholesterol homeostasis regulating LDL uptake and cholesterol release from late endosomes/lysosomes. May also play a role in RHOA activation. This chain is Ragulator complex protein LAMTOR1 (LAMTOR1), found in Bos taurus (Bovine).